The sequence spans 106 residues: Urease subunit beta (106 aa).

Belongs to the urease beta subunit family. Heterotrimer of UreA (gamma), UreB (beta) and UreC (alpha) subunits. Three heterotrimers associate to form the active enzyme.

It is found in the cytoplasm. It catalyses the reaction urea + 2 H2O + H(+) = hydrogencarbonate + 2 NH4(+). It functions in the pathway nitrogen metabolism; urea degradation; CO(2) and NH(3) from urea (urease route): step 1/1. This is Urease subunit beta from Alkalilimnicola ehrlichii (strain ATCC BAA-1101 / DSM 17681 / MLHE-1).